The primary structure comprises 182 residues: MMDSRLKLIQDWLLQLLAEMTVSDPDGNEHEVFLVDIEVHSNKTIDIIEVFADTDSGISVENCKFLSKHISAELDASEEMQALLPRHFKLVVSSPGLSRPLTMNRQYKKNIGRLMQVTYQNADGEIKTIDGRFISLEEEAEASITLDITKIQKSKPNAKPKPPELVTIPFSQIQKAIVQVEF.

It belongs to the RimP family.

It is found in the cytoplasm. Functionally, required for maturation of 30S ribosomal subunits. This is Ribosome maturation factor RimP from Chloroherpeton thalassium (strain ATCC 35110 / GB-78).